The chain runs to 460 residues: Ufm1-specific protease 2 (460 aa).

Catalysis depends on residues cysteine 293, aspartate 417, and histidine 419.

This sequence belongs to the peptidase C78 family.

The protein resides in the endoplasmic reticulum. Its subcellular location is the cytoplasm. It localises to the nucleus. Functionally, thiol-dependent isopeptidase that specifically cleaves UFM1, a ubiquitin-like modifier protein, from conjugated proteins. While it is also able to mediate the processing of UFM1 precursors, a prerequisite for conjugation reactions, UFSP2 mainly acts as a protein deUFMylase that mediates deconjugation of UFM1 from target proteins. The chain is Ufm1-specific protease 2 from Gallus gallus (Chicken).